The primary structure comprises 498 residues: Cytoskeletal signaling protein slm1 (498 aa).

A disordered region spans residues methionine 1–aspartate 23. A phosphoserine mark is found at serine 175 and serine 312. The PH domain occupies valine 300–alanine 405. Residues alanine 416–glutamine 475 form a disordered region. Over residues arginine 441–glutamine 475 the composition is skewed to polar residues.

It localises to the cell tip. Functionally, effector of the TORC2- and calcineurin-signaling pathways. Mediates actin polarization via inhibition of calcineurin-dependent transcription. May play a role in the response to the disruption of sphingolipid synthesis, where dephosphorylation of slm1 leads to the activation and phosphorylation of ypk1 through the TORC2 and PKH1 pathways, which in turn phosphorylates orm1 and lag1 to activate sphingolipid synthesis. The protein is Cytoskeletal signaling protein slm1 (slm1) of Schizosaccharomyces pombe (strain 972 / ATCC 24843) (Fission yeast).